Here is a 977-residue protein sequence, read N- to C-terminus: ELMO domain-containing protein A (977 aa).

One can recognise an ELMO domain in the interval 383–561; sequence EHDALLMKLW…SVKNLIITAL (179 aa). Low complexity-rich tracts occupy residues 792–838 and 852–897; these read SSNN…NNSG and QQQQ…SSSS. Residues 792–899 are disordered; sequence SSNNNIKDNL…SSSSSSSSNP (108 aa).

Associates with mhcA.

Functions as a negative regulator of actin polymerization. Modulates actin/myosin II at cortex actinomyosins to prevent excessive F-actin polymerization around the cell periphery, thereby maintaining proper cell shape during phagocytosis and chemotaxis. This is ELMO domain-containing protein A (elmoA) from Dictyostelium discoideum (Social amoeba).